A 317-amino-acid polypeptide reads, in one-letter code: Tyrosine--tRNA ligase (317 aa).

Tyr32 is an L-tyrosine binding site. The short motif at 37 to 45 (PSGEIHLGH) is the 'HIGH' region element. Residues Tyr152, Gln156, Asp159, and Gln174 each contribute to the L-tyrosine site. The 'KMSKS' region signature appears at 208-212 (KMSSS). Ser211 contacts ATP.

The protein belongs to the class-I aminoacyl-tRNA synthetase family. TyrS type 3 subfamily. As to quaternary structure, homodimer.

Its subcellular location is the cytoplasm. The enzyme catalyses tRNA(Tyr) + L-tyrosine + ATP = L-tyrosyl-tRNA(Tyr) + AMP + diphosphate + H(+). In terms of biological role, catalyzes the attachment of tyrosine to tRNA(Tyr) in a two-step reaction: tyrosine is first activated by ATP to form Tyr-AMP and then transferred to the acceptor end of tRNA(Tyr). The sequence is that of Tyrosine--tRNA ligase from Methanocorpusculum labreanum (strain ATCC 43576 / DSM 4855 / Z).